The following is a 175-amino-acid chain: MVSPNAGSKVSIQSYKHNGQLHRTWENSVILKGTESVVIGANDRTKVIESDGRSWITREPAICYFHSKYWFNIIGMLRNDGIYYYCNISSPFVYDGEALKYIDYDLDVKVFPDMTFQLLDEDEYEEHRNLMNYPQVIDRILHQQLEILIRWIRQGKGPFSPDFVDNWYEMYLTYH.

Residue Arg-23 is the Proton donor of the active site. Residues Asn-87, Asp-103, Asp-105, Asp-107, Asp-120, and Glu-123 each contribute to the Mg(2+) site.

Belongs to the Ntdp family. Requires Mg(2+) as cofactor.

The catalysed reaction is a ribonucleoside 5'-triphosphate + H2O = a ribonucleoside 5'-diphosphate + phosphate + H(+). The enzyme catalyses a ribonucleoside 5'-diphosphate + H2O = a ribonucleoside 5'-phosphate + phosphate + H(+). Has nucleoside phosphatase activity towards nucleoside triphosphates and nucleoside diphosphates. This Oceanobacillus iheyensis (strain DSM 14371 / CIP 107618 / JCM 11309 / KCTC 3954 / HTE831) protein is Nucleoside triphosphate/diphosphate phosphatase.